Consider the following 328-residue polypeptide: COP9 signalosome complex subunit 6 (328 aa).

The MPN domain occupies 42-175; sequence VALHPLVILN…VSVFESVIDI (134 aa).

Belongs to the peptidase M67A family. CSN6 subfamily. In terms of assembly, component of the CSN complex, composed of COPS1/GPS1, COPS2, COPS3, COPS4, COPS5, COPS6, COPS7 (COPS7A or COPS7B), COPS8 and COPS9. In the complex, it probably interacts directly with COPS2, COPS4, COPS5, COPS7 (COPS7A or COPS7B) and COPS9. Interacts with the translation initiation factor EIF3S6. Interacts weakly with RBX1. Directly interacts with COP1 and 14-3-3 protein sigma/SFN. Interacts with ERCC6.

It localises to the cytoplasm. It is found in the nucleus. Component of the COP9 signalosome complex (CSN), a complex involved in various cellular and developmental processes. The CSN complex is an essential regulator of the ubiquitin (Ubl) conjugation pathway by mediating the deneddylation of the cullin subunits of SCF-type E3 ligase complexes, leading to decrease the Ubl ligase activity of SCF-type complexes such as SCF, CSA or DDB2. The complex is also involved in phosphorylation of p53/TP53, c-jun/JUN, IkappaBalpha/NFKBIA, ITPK1 and IRF8, possibly via its association with CK2 and PKD kinases. CSN-dependent phosphorylation of TP53 and JUN promotes and protects degradation by the Ubl system, respectively. Has some glucocorticoid receptor-responsive activity. Stabilizes COP1 through reducing COP1 auto-ubiquitination and decelerating COP1 turnover rate, hence regulates the ubiquitination of COP1 targets, including SFN. The protein is COP9 signalosome complex subunit 6 (COPS6) of Pongo abelii (Sumatran orangutan).